The following is a 248-amino-acid chain: Ras-like protein family member 11B (248 aa).

The interval 30-248 (ASSRVIKIAV…SSKVRTATSV (219 aa)) is small GTPase-like. Residues 41-48 (GGSGVGKT), 88-99 (DTPGVQINEQNL), and 153-156 (NKAD) each bind GTP. The interval 206 to 228 (QNTGTSERRKNSIIPRPKSPNMQ) is disordered.

Belongs to the small GTPase superfamily. Ras family.

The enzyme catalyses GTP + H2O = GDP + phosphate + H(+). The polypeptide is Ras-like protein family member 11B (Xenopus laevis (African clawed frog)).